The sequence spans 495 residues: UPF0371 protein CE2832 (495 aa).

This sequence belongs to the UPF0371 family.

This is UPF0371 protein CE2832 from Corynebacterium efficiens (strain DSM 44549 / YS-314 / AJ 12310 / JCM 11189 / NBRC 100395).